Here is a 258-residue protein sequence, read N- to C-terminus: Regulatory protein RecX (258 aa).

The protein belongs to the RecX family.

The protein resides in the cytoplasm. Modulates RecA activity. In Streptococcus pneumoniae serotype 19F (strain G54), this protein is Regulatory protein RecX.